Consider the following 688-residue polypeptide: Methionine--tRNA ligase (688 aa).

A 'HIGH' region motif is present at residues 13 to 23; sequence PYANGPIHIGH. The Zn(2+) site is built by Cys144, Cys147, Cys157, and Cys160. Residues 334–338 carry the 'KMSKS' region motif; sequence KMSKS. An ATP-binding site is contributed by Lys337. The tRNA-binding domain maps to 582-688; it reads DFAKIDLRVA…AGAVPGMRVR (107 aa).

This sequence belongs to the class-I aminoacyl-tRNA synthetase family. MetG type 1 subfamily. As to quaternary structure, homodimer. Zn(2+) is required as a cofactor.

It localises to the cytoplasm. The enzyme catalyses tRNA(Met) + L-methionine + ATP = L-methionyl-tRNA(Met) + AMP + diphosphate. In terms of biological role, is required not only for elongation of protein synthesis but also for the initiation of all mRNA translation through initiator tRNA(fMet) aminoacylation. This Ralstonia nicotianae (strain ATCC BAA-1114 / GMI1000) (Ralstonia solanacearum) protein is Methionine--tRNA ligase.